A 142-amino-acid chain; its full sequence is Small ribosomal subunit protein uS11c (142 aa).

This sequence belongs to the universal ribosomal protein uS11 family. Part of the 30S ribosomal subunit.

Its subcellular location is the plastid. The protein localises to the chloroplast. In Welwitschia mirabilis (Tree tumbo), this protein is Small ribosomal subunit protein uS11c.